Here is a 1179-residue protein sequence, read N- to C-terminus: Probable manganese-transporting ATPase PDR2 (1179 aa).

At 1 to 20 the chain is on the cytoplasmic side; it reads MSSFRVGGKVVEKVDLCRKK. A helical transmembrane segment spans residues 21–42; it reads QLVWRLDVWPFAILYTVWLTTI. Residues 43-50 lie on the Lumenal side of the membrane; it reads VPSIDFSD. A helical membrane pass occupies residues 51-71; sequence ACIALGGLSAFHILVLLFTTW. The Cytoplasmic portion of the chain corresponds to 72–192; the sequence is SVDFKCFVQF…FDYPQPTFQK (121 aa). A helical transmembrane segment spans residues 193–215; it reads LMKENCMEPFFVFQVFCVGLWCL. Over 216–218 the chain is Lumenal; it reads DEF. The helical transmembrane segment at 219-238 threads the bilayer; sequence WYYSVFTLFMLFMFESTMAK. The Cytoplasmic segment spans residues 239–402; the sequence is SRLKTLTDLR…ERVTANSWES (164 aa). A helical membrane pass occupies residues 403-422; it reads GLFILFLVVFAVIAAGYVLV. The Lumenal portion of the chain corresponds to 423–435; it reads KGLEDPTRSKYKL. Residues 436-453 traverse the membrane as a helical segment; the sequence is LLGCSLIITSVIPPELPM. Topologically, residues 454 to 947 are cytoplasmic; the sequence is ELSIAVNTSL…RQGRSTLVTT (494 aa). Aspartate 491 functions as the 4-aspartylphosphate intermediate in the catalytic mechanism. Positions 812 and 816 each coordinate Mg(2+). Residues 833-880 are disordered; that stretch reads KLPLSPSDSSKDDKSKSKKSKLPLEPASKTITQNGEGSSKGKIPPQNR. Residues 948-967 traverse the membrane as a helical segment; that stretch reads LQMFKILGLNCLATAYVLSV. The Lumenal portion of the chain corresponds to 968-979; that stretch reads MYLDGVKLGDVQ. A helical transmembrane segment spans residues 980 to 997; that stretch reads ATISGVLTAAFFLFISHA. Residues 998–1013 are Cytoplasmic-facing; the sequence is RPLQTLSAERPHPSVF. A helical membrane pass occupies residues 1014-1034; it reads SVYLFLSLIGQFAVHLTFLVY. The Lumenal portion of the chain corresponds to 1035-1059; that stretch reads SVKEAEKHMPEECIEPDASFHPNLV. Residues 1060 to 1079 form a helical membrane-spanning segment; sequence NTVSYMVSMMLQVATFAVNY. Topologically, residues 1080 to 1092 are cytoplasmic; sequence MGHPFNQSIRENK. The chain crosses the membrane as a helical span at residues 1093–1110; it reads PFFYALIAGAGFFTVIAS. The Lumenal segment spans residues 1111-1128; the sequence is DLFRDLNDSLKLVPLPQG. Residues 1129-1148 traverse the membrane as a helical segment; the sequence is LRDKLLIWASLMFIICYSWE. Residues 1149–1179 are Cytoplasmic-facing; the sequence is RLLRWAFPGKISSWKHKQRAVTANLEKKKKV.

This sequence belongs to the cation transport ATPase (P-type) (TC 3.A.3) family. Type V subfamily. In terms of tissue distribution, highly expressed in root meristem. Expressed in pavement cells of trichomes, stipules, stamens and pollen grains.

The protein localises to the endoplasmic reticulum membrane. The enzyme catalyses ATP + H2O = ADP + phosphate + H(+). In terms of biological role, mediates manganese transport into the endoplasmic reticulum. The ATPase activity is required for cellular manganese homeostasis. Plays an important role in pollen and root development through its impact on protein secretion and transport processes. Functions together with LPR1 and LPR2 in a common pathway that adjusts root meristem activity to phosphate availability. Under phosphate limitation, restricts SHR movement in root meristem and is required for maintaining SCR expression in the root meristem stem-cell niche as well as for proximal meristem activity. Can complement the yeast spf1 mutant. This is Probable manganese-transporting ATPase PDR2 (PDR2) from Arabidopsis thaliana (Mouse-ear cress).